A 63-amino-acid chain; its full sequence is Large ribosomal subunit protein uL29 (63 aa).

This sequence belongs to the universal ribosomal protein uL29 family.

The polypeptide is Large ribosomal subunit protein uL29 (Chromohalobacter salexigens (strain ATCC BAA-138 / DSM 3043 / CIP 106854 / NCIMB 13768 / 1H11)).